A 270-amino-acid chain; its full sequence is MKMTSKKMKDELMKKLSRPEWDFQYDSEKEVLRIEQKDSKKGINVSLPGVVAKWEVNKEKAIEEVAYYVQEALIAMHKEENSGAKILPVIRSTSFPKQAEEGNPFIMTDHTAETRIYYALDSNKTYRLIDERLLQKLELTEQQVREMALFNARSLGYEFKQDTVAGNTFYFLNTNDGYDATRILNESLLQSMREKISGDMVVAVPHQDVLIIADIVNEIGYDIIAQMTMKFFAEGHVPITSLSFVYEDGEFEPIFILAKNRKKTDGKEKG.

The protein belongs to the UPF0354 family.

The sequence is that of UPF0354 protein BCG9842_B0431 from Bacillus cereus (strain G9842).